Consider the following 703-residue polypeptide: Phosphate acetyltransferase (703 aa).

The interval Ala377 to Ala703 is phosphate acetyltransferase.

It in the N-terminal section; belongs to the CobB/CobQ family. The protein in the C-terminal section; belongs to the phosphate acetyltransferase and butyryltransferase family.

The protein localises to the cytoplasm. It catalyses the reaction acetyl-CoA + phosphate = acetyl phosphate + CoA. The protein operates within metabolic intermediate biosynthesis; acetyl-CoA biosynthesis; acetyl-CoA from acetate: step 2/2. Functionally, involved in acetate metabolism. The protein is Phosphate acetyltransferase (pta) of Deinococcus geothermalis (strain DSM 11300 / CIP 105573 / AG-3a).